The primary structure comprises 504 residues: MXXXXGYLEFDGARQQSFLYPLFFREYIYVLAYDHGLNRLNRNRSIFLENADYDKKYSSLIVKRLILRMYEQNRLIIPTKDLNQNNFLGHTSLFYYQMISVLFAVIVEIPFSLRLGSSFEGKQFKKSYNLQSIHSIFPFLEDKLSHFNYVLDVLIPYPIHLEILVQTLRYRVKDASSLHFFRFCLYEYCNWKNFYIKKKAILNPRFLLFLYNSHICEYESIFFFLRKRSSHLRSTSYEVLFERILFYVKIQHFLKVFVNNFPAILGLLKDPFIHYVRYHGRCILATKDTPLLMNKWKYYFVNLWQCYFSVWFQSQKVNINQLSKDNLEFLGYLSSLRLNPLVVRSQMLENSFLLDNVRIKLDTKIPISSIIRSLAKDKFCTVLGHPISKATWTDSSDSDILNRFVRICRNISHYYSGSSKKKNLYRIKYILRLCCVKTLARKHKSTVRAFLKRLGSGLLEEFLTGEDQILSLIFPRSYYAYKKLYRVRIWYLDILYLNDLVNHE.

The protein belongs to the intron maturase 2 family. MatK subfamily.

It localises to the plastid. Its subcellular location is the chloroplast. In terms of biological role, usually encoded in the trnK tRNA gene intron. Probably assists in splicing its own and other chloroplast group II introns. In Lepidium campestre (Field pepperwort), this protein is Maturase K.